The primary structure comprises 382 residues: Lactosylceramide 1,3-N-acetyl-beta-D-glucosaminyltransferase B (382 aa).

Residues methionine 1 to histidine 13 are Cytoplasmic-facing. A helical; Signal-anchor for type II membrane protein membrane pass occupies residues leucine 14–tryptophan 30. The Lumenal segment spans residues glutamate 31–threonine 382. Residues asparagine 57, asparagine 112, asparagine 167, and asparagine 276 are each glycosylated (N-linked (GlcNAc...) asparagine).

The protein belongs to the glycosyltransferase 31 family.

Its subcellular location is the golgi apparatus membrane. The enzyme catalyses a beta-D-Gal-(1-&gt;4)-beta-D-Glc-(1&lt;-&gt;1)-Cer(d18:1(4E)) + UDP-N-acetyl-alpha-D-glucosamine = a beta-D-GlcNAc-(1-&gt;3)-beta-D-Gal-(1-&gt;4)-beta-D-Glc-(1&lt;-&gt;1)-Cer(d18:1(4E)) + UDP + H(+). The catalysed reaction is a neolactoside nLc4Cer(d18:1(4E)) + UDP-N-acetyl-alpha-D-glucosamine = a neolactoside IV(3)-beta-GlcNAc-nLc4Cer(d18:1(4E)) + UDP + H(+). It functions in the pathway protein modification; protein glycosylation. Functionally, beta-1,3-N-acetylglucosaminyltransferase that plays a key role in the synthesis of lacto- or neolacto-series carbohydrate chains on glycolipids. The sequence is that of Lactosylceramide 1,3-N-acetyl-beta-D-glucosaminyltransferase B (b3gnt5b) from Danio rerio (Zebrafish).